The chain runs to 254 residues: tRNA pseudouridine synthase A (254 aa).

The Nucleophile role is filled by D52. Y110 contacts substrate.

The protein belongs to the tRNA pseudouridine synthase TruA family. As to quaternary structure, homodimer.

The catalysed reaction is uridine(38/39/40) in tRNA = pseudouridine(38/39/40) in tRNA. Functionally, formation of pseudouridine at positions 38, 39 and 40 in the anticodon stem and loop of transfer RNAs. The chain is tRNA pseudouridine synthase A from Thermodesulfovibrio yellowstonii (strain ATCC 51303 / DSM 11347 / YP87).